The chain runs to 562 residues: Probable malate:quinone oxidoreductase (562 aa).

The interval 530 to 562 (EVPDKSATPTDPTIAPKHQHSTTHNANSEMQAL) is disordered. The span at 551-562 (TTHNANSEMQAL) shows a compositional bias: polar residues.

Belongs to the MQO family. FAD is required as a cofactor.

It catalyses the reaction (S)-malate + a quinone = a quinol + oxaloacetate. It functions in the pathway carbohydrate metabolism; tricarboxylic acid cycle; oxaloacetate from (S)-malate (quinone route): step 1/1. In Xylella fastidiosa (strain M12), this protein is Probable malate:quinone oxidoreductase.